The sequence spans 312 residues: DNA-directed RNA polymerase subunit alpha (312 aa).

The alpha N-terminal domain (alpha-NTD) stretch occupies residues methionine 1 to threonine 229. The alpha C-terminal domain (alpha-CTD) stretch occupies residues glutamine 245–alanine 312.

It belongs to the RNA polymerase alpha chain family. In cyanobacteria the RNAP catalytic core is composed of 2 alpha, 1 beta, 1 beta', 1 gamma and 1 omega subunit. When a sigma factor is associated with the core the holoenzyme is formed, which can initiate transcription.

The catalysed reaction is RNA(n) + a ribonucleoside 5'-triphosphate = RNA(n+1) + diphosphate. In terms of biological role, DNA-dependent RNA polymerase catalyzes the transcription of DNA into RNA using the four ribonucleoside triphosphates as substrates. This Prochlorococcus marinus (strain MIT 9313) protein is DNA-directed RNA polymerase subunit alpha.